Consider the following 323-residue polypeptide: MSVRTDLAVEAKEIYEEKNAGEIPGVELKEYRQGRIKVTEVNVLNEQGEKAMNKAIGNYITLEIPDINQYDTQYKEHISKILAKTLMPLLKIDDSMTALVVGLGNWNITPDALGPKVIEKIMITRHLKEYIPNEIDEGIRPVCGISPGVLGITGIETAEIIKAVSNKIKPDIILCIDALASRRLERVNRTIQIGNTGISPGAGVGNRRMELNEKTLGVPVIAIGVPTVVDAATVANDTIDMVLDEMIKVADKDKNFYNMLKSLDRDEKERMIKEVLNPYVGELMVTPKDVDTLMDSISKIISTGINIALQPALELEDINSYLN.

Residues 1 to 6 constitute a propeptide that is removed on maturation; the sequence is MSVRTD.

Belongs to the peptidase A25 family. Homotetramer. Post-translationally, autoproteolytically processed. The inactive tetrameric zymogen termed p46 autoprocesses to a smaller form termed p41, which is active only during spore germination.

It catalyses the reaction Endopeptidase action with P4 Glu or Asp, P1 preferably Glu &gt; Asp, P1' hydrophobic and P2' Ala.. Its function is as follows. Initiates the rapid degradation of small, acid-soluble proteins during spore germination. This chain is Germination protease, found in Clostridium tetani (strain Massachusetts / E88).